The chain runs to 323 residues: Elongation factor P--(R)-beta-lysine ligase (323 aa).

76 to 78 (SPE) is a binding site for substrate. ATP is bound by residues 100–102 (RNE) and asparagine 109. Residue tyrosine 118 participates in substrate binding. 242-243 (EL) provides a ligand contact to ATP. Substrate is bound at residue glutamate 249. Position 298 (glycine 298) interacts with ATP.

This sequence belongs to the class-II aminoacyl-tRNA synthetase family. EpmA subfamily. As to quaternary structure, homodimer.

The catalysed reaction is D-beta-lysine + L-lysyl-[protein] + ATP = N(6)-((3R)-3,6-diaminohexanoyl)-L-lysyl-[protein] + AMP + diphosphate + H(+). With EpmB is involved in the beta-lysylation step of the post-translational modification of translation elongation factor P (EF-P). Catalyzes the ATP-dependent activation of (R)-beta-lysine produced by EpmB, forming a lysyl-adenylate, from which the beta-lysyl moiety is then transferred to the epsilon-amino group of a conserved specific lysine residue in EF-P. This chain is Elongation factor P--(R)-beta-lysine ligase, found in Pasteurella multocida (strain Pm70).